Consider the following 124-residue polypeptide: Kinocilin (124 aa).

2 consecutive transmembrane segments (helical) span residues 13 to 33 and 40 to 60; these read LQLA…GISV and MGGV…YPFL. The interval 80–124 is disordered; sequence PHPGADHGEGRSSTNGNKEGARSSLSTVSRTLEKLKPGTRGAEEC. A compositionally biased stretch (polar residues) spans 90–109; sequence RSSTNGNKEGARSSLSTVSR. Residues 110 to 124 are compositionally biased toward basic and acidic residues; it reads TLEKLKPGTRGAEEC.

The protein resides in the membrane. Its function is as follows. May play a role in stabilizing dense microtubular networks or in vesicular trafficking. This Homo sapiens (Human) protein is Kinocilin (KNCN).